Consider the following 1576-residue polypeptide: DExH-box ATP-dependent RNA helicase DExH2 (1576 aa).

Positions 15 to 78 (EATGAWATKV…ERRLSLFKGD (64 aa)) constitute an R3H domain. Positions 227–396 (ISAVESNQVV…FGGCPVVRVP (170 aa)) constitute a Helicase ATP-binding domain. Residue 240-247 (GETGCGKT) coordinates ATP. The DEIH box motif lies at 343 to 346 (DEIH). Residues 561 to 735 (LIVKLMKKIC…ELCLQVKMLD (175 aa)) form the Helicase C-terminal domain. 3 disordered regions span residues 1137-1165 (ATSPRDDIPSTNPNELREHDPNTTPMGSK), 1177-1223 (MEES…SLNN), and 1260-1576 (DMGN…PSDQ). The span at 1281–1301 (PNSANSMDLGNMEENTPSDLA) shows a compositional bias: polar residues. Over residues 1305–1319 (KKKEPKSVSKLDLGS) the composition is skewed to basic and acidic residues. The PH1 motif lies at 1349–1360 (KQPEKKRSRSKK). The span at 1352-1363 (EKKRSRSKKRKS) shows a compositional bias: basic residues. Over residues 1381–1412 (ANENEQTEPKSANNLDLGNMKENTPSDLANEN) the composition is skewed to polar residues. A PH2 motif is present at residues 1454–1465 (KQPKKKRSRSKK). Residues 1455–1467 (QPKKKRSRSKKCK) show a composition bias toward basic residues. Positions 1490-1508 (EQKDPESVNRLDPGKEKES) are enriched in basic and acidic residues. Over residues 1509 to 1524 (IPSNLVSGNEQPDSNT) the composition is skewed to polar residues. The span at 1528-1537 (KKPKKKKRKL) shows a compositional bias: basic residues. The short motif at 1530–1537 (PKKKKRKL) is the Nuclear localization signal element. Over residues 1540 to 1562 (NFDSVNNMEEKMPSTNVLSQGNK) the composition is skewed to polar residues.

The protein belongs to the DExH box helicase family. As to quaternary structure, homodimer.

It is found in the nucleus. It carries out the reaction ATP + H2O = ADP + phosphate + H(+). In terms of biological role, may function as an ATP-dependent RNA/DNA helicase. Binds DNA in vitro in a non-specific manner. The chain is DExH-box ATP-dependent RNA helicase DExH2 from Arabidopsis thaliana (Mouse-ear cress).